Consider the following 239-residue polypeptide: tRNA (guanine-N(1)-)-methyltransferase (239 aa).

S-adenosyl-L-methionine contacts are provided by residues glycine 110 and isoleucine 130–leucine 135.

The protein belongs to the RNA methyltransferase TrmD family. Homodimer.

The protein localises to the cytoplasm. It catalyses the reaction guanosine(37) in tRNA + S-adenosyl-L-methionine = N(1)-methylguanosine(37) in tRNA + S-adenosyl-L-homocysteine + H(+). Specifically methylates guanosine-37 in various tRNAs. The polypeptide is tRNA (guanine-N(1)-)-methyltransferase (Borrelia garinii subsp. bavariensis (strain ATCC BAA-2496 / DSM 23469 / PBi) (Borreliella bavariensis)).